Here is a 422-residue protein sequence, read N- to C-terminus: MASLWVRARRVFMKSRASGFSAKAATEMGSGGAEKGYRIPAGKGPHAVGCTDLMTGDAAEGSFLRLYYLSCDDTDTEETPWIPDKEYYQGLSDFLNVYRALGERLFQYYVGSVTCPAKSNAAFKPGEKYPLLVFSHGLGAFRTIYSAICIEMASQGFLVAAVEHRDESASATYFCKKKADSEPEEDQTSGVEKEWIYYRKLRAGEEERCLRHKQVQQRAQECIKALNLILKISSGEEVMNVLNSDFDWNHLKDSVDTSRIAVMGHSFGGATVIESLSKEIRFRCGIALDAWMLPVGDDTYQSSVQQPLLFINSEKFQWAANILKMKKLSSNDTNKKMITIKGSVHQSFPDFTFVSGEIIGKFFKLKGEIDPNEAIDICNHASLAFLQKHLSLKRDFDKWDSLVDGIGPNVISGTNIDLSPTE.

An N-terminal signal peptide occupies residues 1–21; that stretch reads MASLWVRARRVFMKSRASGFS. Serine 266 (nucleophile) is an active-site residue. The active-site Charge relay system is aspartate 289. N-linked (GlcNAc...) asparagine glycosylation occurs at asparagine 331. The Charge relay system role is filled by histidine 345.

It belongs to the AB hydrolase superfamily. Lipase family. In terms of tissue distribution, plasma.

The protein resides in the secreted. It is found in the extracellular space. It carries out the reaction a 1-O-alkyl-2-acetyl-sn-glycero-3-phosphocholine + H2O = a 1-O-alkyl-sn-glycero-3-phosphocholine + acetate + H(+). Its function is as follows. Modulates the action of platelet-activating factor (PAF) by hydrolyzing the sn-2 ester bond to yield the biologically inactive lyso-PAF. Has a specificity for substrates with a short residue at the sn-2 position. It is inactive against long-chain phospholipids. This Gallus gallus (Chicken) protein is Platelet-activating factor acetylhydrolase (PLA2G7).